The primary structure comprises 252 residues: Cell division protein ZapD (252 aa).

This sequence belongs to the ZapD family. In terms of assembly, interacts with FtsZ.

It localises to the cytoplasm. Its function is as follows. Cell division factor that enhances FtsZ-ring assembly. Directly interacts with FtsZ and promotes bundling of FtsZ protofilaments, with a reduction in FtsZ GTPase activity. The sequence is that of Cell division protein ZapD from Ralstonia pickettii (strain 12J).